A 691-amino-acid chain; its full sequence is Elongation factor G (691 aa).

In terms of domain architecture, tr-type G spans 8 to 282 (ERVRNIGIAA…AVIDYLPAPI (275 aa)). Residues 17 to 24 (AHIDAGKT), 81 to 85 (DTPGH), and 135 to 138 (NKMD) contribute to the GTP site.

It belongs to the TRAFAC class translation factor GTPase superfamily. Classic translation factor GTPase family. EF-G/EF-2 subfamily.

It localises to the cytoplasm. In terms of biological role, catalyzes the GTP-dependent ribosomal translocation step during translation elongation. During this step, the ribosome changes from the pre-translocational (PRE) to the post-translocational (POST) state as the newly formed A-site-bound peptidyl-tRNA and P-site-bound deacylated tRNA move to the P and E sites, respectively. Catalyzes the coordinated movement of the two tRNA molecules, the mRNA and conformational changes in the ribosome. The polypeptide is Elongation factor G (Prochlorococcus marinus (strain SARG / CCMP1375 / SS120)).